Reading from the N-terminus, the 315-residue chain is Ribosomal protein L11 methyltransferase (315 aa).

Positions 162, 183, 205, and 248 each coordinate S-adenosyl-L-methionine.

Belongs to the methyltransferase superfamily. PrmA family.

Its subcellular location is the cytoplasm. The catalysed reaction is L-lysyl-[protein] + 3 S-adenosyl-L-methionine = N(6),N(6),N(6)-trimethyl-L-lysyl-[protein] + 3 S-adenosyl-L-homocysteine + 3 H(+). Functionally, methylates ribosomal protein L11. The protein is Ribosomal protein L11 methyltransferase of Oceanobacillus iheyensis (strain DSM 14371 / CIP 107618 / JCM 11309 / KCTC 3954 / HTE831).